Here is a 480-residue protein sequence, read N- to C-terminus: EGF-like repeat and discoidin I-like domain-containing protein 3 (480 aa).

The N-terminal stretch at 1 to 23 is a signal peptide; it reads MKRSVAVWLLVGLSLGVPQFGKG. Positions 24-60 constitute an EGF-like 1 domain; the sequence is DICDPNPCENGGICLPGLADGSFSCECPDGFTDPNCS. Disulfide bonds link cysteine 26-cysteine 37, cysteine 31-cysteine 48, and cysteine 50-cysteine 59. The O-linked (GalNAc...) threonine glycan is linked to threonine 73. EGF-like domains are found at residues 74–117 and 119–155; these read SAGP…IHCQ and NINECEVEPCKNGGICTDLVANYSCECPGEFMGRNCQ. Disulfide bonds link cysteine 78–cysteine 89, cysteine 83–cysteine 105, and cysteine 107–cysteine 116. The O-linked (Fuc...) threonine glycan is linked to threonine 88. The Cell attachment site signature appears at 96-98; the sequence is RGD. Asparagine 119, isoleucine 120, and glutamate 122 together coordinate Ca(2+). Cystine bridges form between cysteine 123–cysteine 134, cysteine 128–cysteine 143, cysteine 145–cysteine 154, cysteine 158–cysteine 314, cysteine 301–cysteine 305, and cysteine 319–cysteine 476. Aspartate 136 and leucine 137 together coordinate Ca(2+). N-linked (GlcNAc...) asparagine glycosylation is present at asparagine 140. 2 consecutive F5/8 type C domains span residues 158–314 and 319–476; these read CSGP…LLGC and CSEP…LLGC.

The protein resides in the secreted. In terms of biological role, promotes adhesion of endothelial cells through interaction with the alpha-v/beta-3 integrin receptor. Inhibits formation of vascular-like structures. May be involved in regulation of vascular morphogenesis of remodeling in embryonic development. This chain is EGF-like repeat and discoidin I-like domain-containing protein 3 (EDIL3), found in Homo sapiens (Human).